Here is a 464-residue protein sequence, read N- to C-terminus: Cysteine--tRNA ligase (464 aa).

Cys-27 lines the Zn(2+) pocket. A 'HIGH' region motif is present at residues 29 to 39 (PTVYDDAHLGH). Zn(2+) is bound by residues Cys-203, His-234, and Glu-238. The 'KMSKS' region motif lies at 266-270 (KMSKS). Lys-269 contacts ATP.

Belongs to the class-I aminoacyl-tRNA synthetase family. Monomer. Zn(2+) is required as a cofactor.

The protein localises to the cytoplasm. It catalyses the reaction tRNA(Cys) + L-cysteine + ATP = L-cysteinyl-tRNA(Cys) + AMP + diphosphate. This is Cysteine--tRNA ligase from Campylobacter concisus (strain 13826).